The following is a 1316-amino-acid chain: DNA-directed RNA polymerase subunit beta' (1316 aa).

4 residues coordinate Zn(2+): Cys-60, Cys-62, Cys-75, and Cys-78. The Mg(2+) site is built by Asp-535, Asp-537, and Asp-539. Zn(2+) is bound by residues Cys-891, Cys-968, Cys-975, and Cys-978.

It belongs to the RNA polymerase beta' chain family. As to quaternary structure, the RNAP catalytic core consists of 2 alpha, 1 beta, 1 beta' and 1 omega subunit. When a sigma factor is associated with the core the holoenzyme is formed, which can initiate transcription. The cofactor is Mg(2+). It depends on Zn(2+) as a cofactor.

The enzyme catalyses RNA(n) + a ribonucleoside 5'-triphosphate = RNA(n+1) + diphosphate. Functionally, DNA-dependent RNA polymerase catalyzes the transcription of DNA into RNA using the four ribonucleoside triphosphates as substrates. In Mycobacterium bovis (strain BCG / Pasteur 1173P2), this protein is DNA-directed RNA polymerase subunit beta'.